Consider the following 396-residue polypeptide: Putative T-box protein 39 (396 aa).

A DNA-binding region (T-box) is located at residues 11–192 (MAEEDRWKQW…KNSTYGNRLD (182 aa)). Positions 185-215 (STYGNRLDGGNKRKNTDSSEERTSKRSKNET) are disordered. The segment covering 193–215 (GGNKRKNTDSSEERTSKRSKNET) has biased composition (basic and acidic residues).

The protein localises to the nucleus. The protein is Putative T-box protein 39 (tbx-39) of Caenorhabditis elegans.